A 190-amino-acid polypeptide reads, in one-letter code: Threonylcarbamoyl-AMP synthase (190 aa).

Positions 7 to 190 constitute a YrdC-like domain; sequence RDAIAAAIDV…ALTGELFRQG (184 aa).

It belongs to the SUA5 family. TsaC subfamily.

It is found in the cytoplasm. It catalyses the reaction L-threonine + hydrogencarbonate + ATP = L-threonylcarbamoyladenylate + diphosphate + H2O. Its function is as follows. Required for the formation of a threonylcarbamoyl group on adenosine at position 37 (t(6)A37) in tRNAs that read codons beginning with adenine. Catalyzes the conversion of L-threonine, HCO(3)(-)/CO(2) and ATP to give threonylcarbamoyl-AMP (TC-AMP) as the acyladenylate intermediate, with the release of diphosphate. The protein is Threonylcarbamoyl-AMP synthase of Escherichia coli O9:H4 (strain HS).